A 302-amino-acid chain; its full sequence is Sulfate adenylyltransferase subunit 2 (302 aa).

The tract at residues 280 to 302 (RQGRVIDHDQAGSMEQKKREGYF) is disordered.

This sequence belongs to the PAPS reductase family. CysD subfamily. As to quaternary structure, heterodimer composed of CysD, the smaller subunit, and CysN.

It carries out the reaction sulfate + ATP + H(+) = adenosine 5'-phosphosulfate + diphosphate. It functions in the pathway sulfur metabolism; hydrogen sulfide biosynthesis; sulfite from sulfate: step 1/3. Its function is as follows. With CysN forms the ATP sulfurylase (ATPS) that catalyzes the adenylation of sulfate producing adenosine 5'-phosphosulfate (APS) and diphosphate, the first enzymatic step in sulfur assimilation pathway. APS synthesis involves the formation of a high-energy phosphoric-sulfuric acid anhydride bond driven by GTP hydrolysis by CysN coupled to ATP hydrolysis by CysD. This is Sulfate adenylyltransferase subunit 2 from Hahella chejuensis (strain KCTC 2396).